The sequence spans 196 residues: Ribosome maturation factor RimM (196 aa).

Positions Q118–F196 constitute a PRC barrel domain.

This sequence belongs to the RimM family. In terms of assembly, binds ribosomal protein uS19.

Its subcellular location is the cytoplasm. Functionally, an accessory protein needed during the final step in the assembly of 30S ribosomal subunit, possibly for assembly of the head region. Essential for efficient processing of 16S rRNA. May be needed both before and after RbfA during the maturation of 16S rRNA. It has affinity for free ribosomal 30S subunits but not for 70S ribosomes. The polypeptide is Ribosome maturation factor RimM (Alcanivorax borkumensis (strain ATCC 700651 / DSM 11573 / NCIMB 13689 / SK2)).